The chain runs to 284 residues: Lipoyl synthase (284 aa).

Residues Cys36, Cys41, Cys47, Cys62, Cys66, Cys69, and Ser273 each contribute to the [4Fe-4S] cluster site. The Radical SAM core domain maps to 48 to 262 (WGKGTATFMI…RTIGLKKGFR (215 aa)).

It belongs to the radical SAM superfamily. Lipoyl synthase family. The cofactor is [4Fe-4S] cluster.

The protein resides in the cytoplasm. It carries out the reaction [[Fe-S] cluster scaffold protein carrying a second [4Fe-4S](2+) cluster] + N(6)-octanoyl-L-lysyl-[protein] + 2 oxidized [2Fe-2S]-[ferredoxin] + 2 S-adenosyl-L-methionine + 4 H(+) = [[Fe-S] cluster scaffold protein] + N(6)-[(R)-dihydrolipoyl]-L-lysyl-[protein] + 4 Fe(3+) + 2 hydrogen sulfide + 2 5'-deoxyadenosine + 2 L-methionine + 2 reduced [2Fe-2S]-[ferredoxin]. It functions in the pathway protein modification; protein lipoylation via endogenous pathway; protein N(6)-(lipoyl)lysine from octanoyl-[acyl-carrier-protein]: step 2/2. In terms of biological role, catalyzes the radical-mediated insertion of two sulfur atoms into the C-6 and C-8 positions of the octanoyl moiety bound to the lipoyl domains of lipoate-dependent enzymes, thereby converting the octanoylated domains into lipoylated derivatives. In Phocaeicola vulgatus (strain ATCC 8482 / DSM 1447 / JCM 5826 / CCUG 4940 / NBRC 14291 / NCTC 11154) (Bacteroides vulgatus), this protein is Lipoyl synthase.